Consider the following 1915-residue polypeptide: Cysteine repeat modular protein 2 (1915 aa).

A signal peptide spans 1-23 (MKFKKELINILALIFVLKKNIFA). FU repeat units follow at residues 53 to 98 (LGLC…QTYV), 104 to 151 (SCIC…GYTQ), 161 to 208 (QLLC…LQYK), 210 to 263 (NGIC…GYVV), and 267 to 315 (TQRC…GNYQ). Residue Asn138 is glycosylated (N-linked (GlcNAc...) asparagine). Residues Asn274, Asn279, and Asn316 are each glycosylated (N-linked (GlcNAc...) asparagine). 5 FU repeats span residues 317–362 (SSLC…GFYT), 373–422 (QPIC…QTYY), 427–492 (TRSC…GFYQ), 496–546 (NNSC…SQNN), and 554–602 (TQAC…GTYM). N-linked (GlcNAc...) asparagine glycosylation occurs at Asn409. 4 N-linked (GlcNAc...) asparagine glycosylation sites follow: Asn496, Asn572, Asn603, and Asn621. FU repeat units follow at residues 606 to 639 (TNQC…LQQN), 640 to 686 (YNVC…GFYV), and 690 to 739 (QQAC…NECL). N-linked (GlcNAc...) asparagine glycosylation occurs at Asn742. FU repeat units lie at residues 760 to 814 (DGQC…GFYY) and 818 to 865 (NKQC…GYYQ). Residues Asn909, Asn930, Asn1051, Asn1085, and Asn1193 are each glycosylated (N-linked (GlcNAc...) asparagine). One can recognise an EGF-like domain in the interval 1184 to 1224 (VQIPCDSNINCSGNGKCLWSQDNYNEILCICNINYAGRYCE). Intrachain disulfides connect Cys1188–Cys1200, Cys1194–Cys1212, and Cys1214–Cys1223. N-linked (GlcNAc...) asparagine glycans are attached at residues Asn1250, Asn1297, Asn1519, Asn1546, Asn1554, Asn1580, and Asn1596. 5 helical membrane-spanning segments follow: residues 1599-1619 (LLYA…ISII), 1662-1682 (YAQL…VYSL), 1704-1724 (STSV…VNLF), 1763-1783 (GLVF…ILSF), and 1796-1816 (FASF…FCFI). An N-linked (GlcNAc...) asparagine glycan is attached at Asn1867.

It is found in the membrane. In terms of biological role, required for mucocyst secretion. This chain is Cysteine repeat modular protein 2, found in Tetrahymena thermophila (strain SB210).